The chain runs to 523 residues: 3-hydroxybenzoate--CoA/4-hydroxybenzoate--CoA ligase (523 aa).

It belongs to the ATP-dependent AMP-binding enzyme family. Benzoate-CoA ligase subfamily.

It catalyses the reaction 4-hydroxybenzoate + ATP + CoA = 4-hydroxybenzoyl-CoA + AMP + diphosphate. The enzyme catalyses 3-hydroxybenzoate + ATP + CoA = 3-hydroxybenzoyl-CoA + AMP + diphosphate. Catalyzes the ligation of 3-hydroxybenzoate or 4-hydroxybenzoate and CoA at the expense of ATP. The enzyme shows low activity towards benzoate, 4-aminobenzoate, 3-aminobenzoate, 3-fluorobenzoate, 4-fluorobenzoate, 3-chlorobenzoate, and 4-chlorobenzoate. There is no activity with 3,4-dihydroxybenzoate, 2,3-dihydroxybenzoate, and 2-hydroxybenzoate as substrates. The polypeptide is 3-hydroxybenzoate--CoA/4-hydroxybenzoate--CoA ligase (hcl) (Thauera aromatica).